The following is a 296-amino-acid chain: 4-hydroxy-tetrahydrodipicolinate synthase (296 aa).

Pyruvate is bound at residue Thr-47. The active-site Proton donor/acceptor is Tyr-135. The active-site Schiff-base intermediate with substrate is Lys-164. Ile-207 is a binding site for pyruvate.

This sequence belongs to the DapA family. In terms of assembly, homotetramer; dimer of dimers.

The protein localises to the cytoplasm. The enzyme catalyses L-aspartate 4-semialdehyde + pyruvate = (2S,4S)-4-hydroxy-2,3,4,5-tetrahydrodipicolinate + H2O + H(+). It functions in the pathway amino-acid biosynthesis; L-lysine biosynthesis via DAP pathway; (S)-tetrahydrodipicolinate from L-aspartate: step 3/4. In terms of biological role, catalyzes the condensation of (S)-aspartate-beta-semialdehyde [(S)-ASA] and pyruvate to 4-hydroxy-tetrahydrodipicolinate (HTPA). The polypeptide is 4-hydroxy-tetrahydrodipicolinate synthase (Karelsulcia muelleri (strain GWSS) (Sulcia muelleri)).